A 927-amino-acid polypeptide reads, in one-letter code: LPS-assembly protein LptD (927 aa).

Positions 1–22 (MALKSPAFRKKFPLLVTGSLLA) are cleaved as a signal peptide. The tract at residues 60–100 (LPPRPVHSTASVSSNGTVTSESSSSGEQVAGPQLVTEAKGK) is disordered. A compositionally biased stretch (low complexity) spans 70–86 (SVSSNGTVTSESSSSGE).

Belongs to the LptD family. As to quaternary structure, component of the lipopolysaccharide transport and assembly complex. Interacts with LptE and LptA.

It localises to the cell outer membrane. Its function is as follows. Together with LptE, is involved in the assembly of lipopolysaccharide (LPS) at the surface of the outer membrane. The chain is LPS-assembly protein LptD from Pseudomonas syringae pv. tomato (strain ATCC BAA-871 / DC3000).